A 229-amino-acid chain; its full sequence is Cytochrome c oxidase subunit 2 (229 aa).

The Mitochondrial intermembrane segment spans residues 1 to 26 (MSTWANLGLQDSASPLMEQLIFFHDH). A helical membrane pass occupies residues 27 to 48 (ALLILVMITVLVGYLMFMLFFN). Topologically, residues 49-62 (SYVNRFLLHGQLIE) are mitochondrial matrix. The helical transmembrane segment at 63–82 (MIWTILPAIILLFIAMPSLR) threads the bilayer. The Mitochondrial intermembrane portion of the chain corresponds to 83 to 229 (LLYLLDEINE…IKWISNSVNS (147 aa)). 6 residues coordinate Cu cation: His-161, Cys-196, Glu-198, Cys-200, His-204, and Met-207. Mg(2+) is bound at residue Glu-198.

This sequence belongs to the cytochrome c oxidase subunit 2 family. In terms of assembly, component of the cytochrome c oxidase (complex IV, CIV), a multisubunit enzyme composed of a catalytic core of 3 subunits and several supernumerary subunits. The complex exists as a monomer or a dimer and forms supercomplexes (SCs) in the inner mitochondrial membrane with ubiquinol-cytochrome c oxidoreductase (cytochrome b-c1 complex, complex III, CIII). Cu cation serves as cofactor.

The protein localises to the mitochondrion inner membrane. It catalyses the reaction 4 Fe(II)-[cytochrome c] + O2 + 8 H(+)(in) = 4 Fe(III)-[cytochrome c] + 2 H2O + 4 H(+)(out). Functionally, component of the cytochrome c oxidase, the last enzyme in the mitochondrial electron transport chain which drives oxidative phosphorylation. The respiratory chain contains 3 multisubunit complexes succinate dehydrogenase (complex II, CII), ubiquinol-cytochrome c oxidoreductase (cytochrome b-c1 complex, complex III, CIII) and cytochrome c oxidase (complex IV, CIV), that cooperate to transfer electrons derived from NADH and succinate to molecular oxygen, creating an electrochemical gradient over the inner membrane that drives transmembrane transport and the ATP synthase. Cytochrome c oxidase is the component of the respiratory chain that catalyzes the reduction of oxygen to water. Electrons originating from reduced cytochrome c in the intermembrane space (IMS) are transferred via the dinuclear copper A center (CU(A)) of subunit 2 and heme A of subunit 1 to the active site in subunit 1, a binuclear center (BNC) formed by heme A3 and copper B (CU(B)). The BNC reduces molecular oxygen to 2 water molecules using 4 electrons from cytochrome c in the IMS and 4 protons from the mitochondrial matrix. This chain is Cytochrome c oxidase subunit 2 (mt:CoII), found in Drosophila narragansett (Fruit fly).